The primary structure comprises 452 residues: Tripartite motif-containing protein 51G (452 aa).

The RING-type zinc finger occupies 15-56; sequence CPICMNYFIDPVTIDCGHSFCRPCFYLNWQDMAVLAQCSKCK. The B box-type zinc-finger motif lies at 88–129; the sequence is SEEQICGTHRETKEMFCEVDKSLLCLLCSNSQEHRNHRHCPT. Zn(2+) is bound by residues Cys-93, His-96, Cys-115, and His-121. Residues 269–452 form the B30.2/SPRY domain; sequence EFSAGPIIGL…LWPIICCSHF (184 aa).

The protein belongs to the TRIM/RBCC family.

This is Tripartite motif-containing protein 51G from Homo sapiens (Human).